A 165-amino-acid chain; its full sequence is Large ribosomal subunit protein uL10 (165 aa).

It belongs to the universal ribosomal protein uL10 family. As to quaternary structure, part of the ribosomal stalk of the 50S ribosomal subunit. The N-terminus interacts with L11 and the large rRNA to form the base of the stalk. The C-terminus forms an elongated spine to which L12 dimers bind in a sequential fashion forming a multimeric L10(L12)X complex.

In terms of biological role, forms part of the ribosomal stalk, playing a central role in the interaction of the ribosome with GTP-bound translation factors. The protein is Large ribosomal subunit protein uL10 of Yersinia pseudotuberculosis serotype IB (strain PB1/+).